The following is a 128-amino-acid chain: Nanos homolog 1 (128 aa).

The tract at residues 7–23 (FNSWSDYLGLSSLISRG) is essential for its translational repressor activity. Positions 23-58 (GLQPREGGESPRPRWKASSPTPAEPLPSKAAEAHGH) are disordered. A Nanos-type zinc finger spans residues 60-114 (GCGFCRSNREAQSLYSSHRLRAPDGRVLCPVLRGYTCPLCGANGDWAHTMRYCPL). Zn(2+) contacts are provided by Cys-61, Cys-64, His-77, Cys-88, Cys-96, Cys-99, His-107, and Cys-112. Short sequence motifs (C2HC) lie at residues 61 to 88 (CGFCRSNREAQSLYSSHRLRAPDGRVLC) and 96 to 112 (CPLCGANGDWAHTMRYC).

This sequence belongs to the nanos family. Interacts with ccnb1.

The protein localises to the cytoplasm. It localises to the perinuclear region. Its function is as follows. Acts as a translational repressor. Can mediate repression affecting different steps in the translation process: cap-driven, IRES-driven, polyadenylated RNAs or nonpolyadenylated RNAs. Essential for the development of primordial germ cells (PGCs) by ensuring their proper migration and survival. The sequence is that of Nanos homolog 1 (nanos1) from Xenopus tropicalis (Western clawed frog).